Reading from the N-terminus, the 513-residue chain is Maturase K (513 aa).

It belongs to the intron maturase 2 family. MatK subfamily.

It is found in the plastid. The protein resides in the chloroplast. Its function is as follows. Usually encoded in the trnK tRNA gene intron. Probably assists in splicing its own and other chloroplast group II introns. This chain is Maturase K, found in Phragmites australis (Common reed).